The following is a 72-amino-acid chain: Cell division protein ZapB (72 aa).

Residues 1–71 (MSLEILDQLE…LRSLLGRIDN (71 aa)) are a coiled coil. Residues 36–56 (LSRQTNEQLRSENEHLKTEHH) are disordered. The span at 44–56 (LRSENEHLKTEHH) shows a compositional bias: basic and acidic residues.

Belongs to the ZapB family. In terms of assembly, homodimer. The ends of the coiled-coil dimer bind to each other, forming polymers. Interacts with FtsZ.

It is found in the cytoplasm. Its function is as follows. Non-essential, abundant cell division factor that is required for proper Z-ring formation. It is recruited early to the divisome by direct interaction with FtsZ, stimulating Z-ring assembly and thereby promoting cell division earlier in the cell cycle. Its recruitment to the Z-ring requires functional FtsA or ZipA. The sequence is that of Cell division protein ZapB from Histophilus somni (strain 129Pt) (Haemophilus somnus).